Here is a 1035-residue protein sequence, read N- to C-terminus: Kinesin-like protein KIN-4A (1035 aa).

The 360-residue stretch at 11–370 (SVKVAVHIRP…LKYANRARNI (360 aa)) folds into the Kinesin motor domain. 90 to 97 (GQTGSGKT) lines the ATP pocket. Coiled coils occupy residues 408-436 (CAEV…HEYR), 504-707 (QNSM…RKSS), and 881-911 (KEIV…IATS). The segment at 704–724 (RKSSPREHSAGTNGFGTNGQT) is disordered.

The protein belongs to the TRAFAC class myosin-kinesin ATPase superfamily. Kinesin family. KIN-4 subfamily. Homodimer. In terms of tissue distribution, expressed in stems and flowers. Detected in cells undergoing secondary wall deposition including developing interfascicular fibers and xylem cells, but also in dividing cells and expanding/elongating parenchyma cells.

Its subcellular location is the cytoplasm. It localises to the cytoskeleton. Its function is as follows. Kinesin-like motor protein involved in the control of the oriented deposition of cellulose microfibrils. Its motor activity is directed toward the microtubule's plus end. It possesses the potential to drive long-distance transport of cargo along cortical microtubules. Regulates cell wall mechanics during cell elongation, by the regulation of primary and secondary walls deposition. Contributes to cortical microtubule-mediated trafficking of cell wall components. The protein is Kinesin-like protein KIN-4A of Arabidopsis thaliana (Mouse-ear cress).